A 206-amino-acid chain; its full sequence is Methyltransferase-like 26 (206 aa).

It belongs to the UPF0585 family.

The sequence is that of Methyltransferase-like 26 from Danio rerio (Zebrafish).